The chain runs to 399 residues: Ribose-phosphate pyrophosphokinase 2, chloroplastic (399 aa).

Residues 1 to 32 constitute a chloroplast transit peptide; that stretch reads MAAKAAALSSSPFVSSRRLSSPAASLRARTPR. Mg(2+) is bound by residues aspartate 214, histidine 216, aspartate 225, and aspartate 229. The segment at 299 to 314 is binding of phosphoribosylpyrophosphate; sequence GKVAIMVDDMIDTAGT.

The protein belongs to the ribose-phosphate pyrophosphokinase family. Requires Mg(2+) as cofactor.

The protein resides in the plastid. The protein localises to the chloroplast. It catalyses the reaction D-ribose 5-phosphate + ATP = 5-phospho-alpha-D-ribose 1-diphosphate + AMP + H(+). In Oryza sativa subsp. japonica (Rice), this protein is Ribose-phosphate pyrophosphokinase 2, chloroplastic.